The primary structure comprises 432 residues: 3-phosphoshikimate 1-carboxyvinyltransferase (432 aa).

3-phosphoshikimate is bound by residues K23, S24, and R28. Position 23 (K23) interacts with phosphoenolpyruvate. Phosphoenolpyruvate contacts are provided by G95 and R123. The 3-phosphoshikimate site is built by S167, Q169, D317, and K344. Phosphoenolpyruvate is bound at residue Q169. D317 acts as the Proton acceptor in catalysis. Phosphoenolpyruvate is bound by residues R348 and R390.

Belongs to the EPSP synthase family. As to quaternary structure, monomer.

It localises to the cytoplasm. The catalysed reaction is 3-phosphoshikimate + phosphoenolpyruvate = 5-O-(1-carboxyvinyl)-3-phosphoshikimate + phosphate. It participates in metabolic intermediate biosynthesis; chorismate biosynthesis; chorismate from D-erythrose 4-phosphate and phosphoenolpyruvate: step 6/7. In terms of biological role, catalyzes the transfer of the enolpyruvyl moiety of phosphoenolpyruvate (PEP) to the 5-hydroxyl of shikimate-3-phosphate (S3P) to produce enolpyruvyl shikimate-3-phosphate and inorganic phosphate. The sequence is that of 3-phosphoshikimate 1-carboxyvinyltransferase from Staphylococcus haemolyticus (strain JCSC1435).